We begin with the raw amino-acid sequence, 371 residues long: Monomethylxanthine methyltransferase 2 (371 aa).

S-adenosyl-L-homocysteine-binding residues include tyrosine 18, cysteine 61, asparagine 66, aspartate 100, leucine 101, serine 139, phenylalanine 140, and cysteine 156. Residues tyrosine 157, histidine 160, and tryptophan 161 each contribute to the theobromine site. Mg(2+)-binding residues include asparagine 178, aspartate 260, phenylalanine 262, and asparagine 263. A theobromine-binding site is contributed by tyrosine 355.

The protein belongs to the methyltransferase superfamily. Type-7 methyltransferase family. Mg(2+) is required as a cofactor.

It catalyses the reaction 7-methylxanthine + S-adenosyl-L-methionine = theobromine + S-adenosyl-L-homocysteine + H(+). It participates in alkaloid biosynthesis. In terms of biological role, involved in the biosynthesis of caffeine. Catalyzes the conversion of 7-methylxanthine (7mX) to theobromine and with a lower activity of paraxanthine to caffeine. This Coffea canephora (Robusta coffee) protein is Monomethylxanthine methyltransferase 2.